A 460-amino-acid polypeptide reads, in one-letter code: MATGKIVQVIGAVVDVEFPQDAVPRVYDALAVQNGNERLVLEVQQQLGGGIVRTIAMGSSDGLRRGLDVKDLEHPIEVPVGKATLGRIMNVLGEPVDMKGEIGEEERWAIHRAAPSYEELSNSQELLETGIKVIDLMCPFAKGGKVGLFGGAGVGKTVNMMELIRNIAIEHSGYSVFAGVGERTREGNDFYHEMTDSNVIDKVSLVYGQMNEPPGNRLRVALTGLTMAEKFRDEGRDVLLFVDNIYRYTLAGTEVSALLGRMPSAVGYQPTLAEEMGVLQERITSTKTGSITSVQAVYVPADDLTDPSPATTFAHLDATVVLSRQIASLGIYPAVDPLDSTSRQLDPLVVGQEHYDTARGVQSILQRYQELKDIIAILGMDELSEEDKLVVARARKIQRFLSQPFFVAEVFTGSPGKYVSLKDTIRGFKGIMEGEYDHLPEQAFYMVGSIEEAVEKAKKL.

An ATP-binding site is contributed by 150-157; sequence GGAGVGKT.

This sequence belongs to the ATPase alpha/beta chains family. In terms of assembly, F-type ATPases have 2 components, CF(1) - the catalytic core - and CF(0) - the membrane proton channel. CF(1) has five subunits: alpha(3), beta(3), gamma(1), delta(1), epsilon(1). CF(0) has three main subunits: a(1), b(2) and c(9-12). The alpha and beta chains form an alternating ring which encloses part of the gamma chain. CF(1) is attached to CF(0) by a central stalk formed by the gamma and epsilon chains, while a peripheral stalk is formed by the delta and b chains.

The protein resides in the cell inner membrane. It catalyses the reaction ATP + H2O + 4 H(+)(in) = ADP + phosphate + 5 H(+)(out). Functionally, produces ATP from ADP in the presence of a proton gradient across the membrane. The catalytic sites are hosted primarily by the beta subunits. This chain is ATP synthase subunit beta, found in Shigella dysenteriae serotype 1 (strain Sd197).